The sequence spans 315 residues: Calumenin (315 aa).

Residues M1–S19 form the signal peptide. Position 44 is a phosphoserine (S44). A Phosphotyrosine modification is found at Y47. At T65 the chain carries Phosphothreonine. EF-hand domains follow at residues E68 to R103, W104 to D139, Q151 to D186, M188 to N223, W229 to D264, and H265 to S300. S69 is subject to Phosphoserine; by FAM20C. Ca(2+) is bound by residues D81, D83, D85, E92, D117, N119, D121, and E128. Residue N131 is glycosylated (N-linked (GlcNAc...) (complex) asparagine). D164 contributes to the Ca(2+) binding site. K165 carries the post-translational modification N6-acetyllysine. Ca(2+)-binding residues include D166, D168, E175, D201, N203, D205, E212, D242, N244, D246, K248, and E253. T254 carries the post-translational modification Phosphothreonine. Phosphoserine occurs at positions 261 and 277. Residues D278, N280, D282, K284, and E289 each contribute to the Ca(2+) site. Residues H312–F315 carry the Prevents secretion from ER motif.

This sequence belongs to the CREC family. As to quaternary structure, interacts with GGCX. Ubiquitously expressed. Expressed at high levels in heart, placenta and skeletal muscle, at lower levels in lung, kidney and pancreas and at very low levels in brain and liver.

Its subcellular location is the endoplasmic reticulum membrane. It is found in the golgi apparatus. The protein resides in the secreted. The protein localises to the melanosome. It localises to the sarcoplasmic reticulum lumen. Involved in regulation of vitamin K-dependent carboxylation of multiple N-terminal glutamate residues. Seems to inhibit gamma-carboxylase GGCX. Binds 7 calcium ions with a low affinity. The polypeptide is Calumenin (CALU) (Homo sapiens (Human)).